The chain runs to 182 residues: UPF0397 protein BT9727_2423 (182 aa).

5 helical membrane-spanning segments follow: residues 9 to 29, 40 to 60, 71 to 91, 114 to 134, and 142 to 162; these read VVAI…GFSI, AILT…IGLI, WGIW…MGFI, ITGL…DIIV, and IVIQ…VLGL.

Belongs to the UPF0397 family.

It localises to the cell membrane. The chain is UPF0397 protein BT9727_2423 from Bacillus thuringiensis subsp. konkukian (strain 97-27).